Here is a 111-residue protein sequence, read N- to C-terminus: TPR repeat-containing protein associated with Hsp90 (111 aa).

The residue at position 2 (Ser2) is an N-acetylserine. 2 TPR repeats span residues 4–37 (FEKQ…QPQN) and 39–71 (VGYS…TSTA).

In terms of assembly, component of the R2TP complex composed at least of RVB1, RVB2, TAH1 and PIH1. Also interacts with HSP90.

It localises to the cytoplasm. The protein resides in the nucleus. The protein is TPR repeat-containing protein associated with Hsp90 (TAH1) of Saccharomyces cerevisiae (strain ATCC 204508 / S288c) (Baker's yeast).